The chain runs to 404 residues: Cysteine desulfurase IscS (404 aa).

Residues 75–76, Asn155, Gln183, and 203–205 each bind pyridoxal 5'-phosphate; these read AT and SAH. Lys206 is modified (N6-(pyridoxal phosphate)lysine). Thr243 is a pyridoxal 5'-phosphate binding site. The active-site Cysteine persulfide intermediate is the Cys328. Cys328 serves as a coordination point for [2Fe-2S] cluster.

Belongs to the class-V pyridoxal-phosphate-dependent aminotransferase family. NifS/IscS subfamily. Homodimer. Forms a heterotetramer with IscU, interacts with other sulfur acceptors. Pyridoxal 5'-phosphate serves as cofactor.

It localises to the cytoplasm. The enzyme catalyses (sulfur carrier)-H + L-cysteine = (sulfur carrier)-SH + L-alanine. It participates in cofactor biosynthesis; iron-sulfur cluster biosynthesis. Functionally, master enzyme that delivers sulfur to a number of partners involved in Fe-S cluster assembly, tRNA modification or cofactor biosynthesis. Catalyzes the removal of elemental sulfur atoms from cysteine to produce alanine. Functions as a sulfur delivery protein for Fe-S cluster synthesis onto IscU, an Fe-S scaffold assembly protein, as well as other S acceptor proteins. This Pseudomonas fluorescens (strain SBW25) protein is Cysteine desulfurase IscS.